Here is a 318-residue protein sequence, read N- to C-terminus: MVELMFPLLLLLLPFLLYMAAPQIRKMLSSGVCTSTVQLPGKVVVVTGANTGIGKETAKELAQRGARVYLACRDVEKGELVAKEIQTTTGNQQVLVRKLDLSDTKSIRAFAKGFLAEEKHLHVLINNAGVMMCPYSKTADGFEMHIGVNHLGHFLLTHLLLEKLKESAPSRIVNVSSLAHHLGRIHFHNLQGEKFYNAGLAYCHSKLANILFTQELARRLKGSGVTTYSVHPGTVQSELVRHSSFMRWMWWLFSFFIKTPQQGAQTSLHCALTEGLEILSGNHFSDCHVAWVSAQARNETIARRLWDVSCDLLGLPID.

The helical; Signal-anchor for type II membrane protein transmembrane segment at 1-21 (MVELMFPLLLLLLPFLLYMAA) threads the bilayer. Over 22 to 318 (PQIRKMLSSG…SCDLLGLPID (297 aa)) the chain is Cytoplasmic. 48–54 (GANTGIG) is a binding site for NADP(+). Position 112 is an N6-acetyllysine (Lys-112). Ser-177 serves as a coordination point for substrate. Catalysis depends on Tyr-202, which acts as the Proton acceptor.

Belongs to the short-chain dehydrogenases/reductases (SDR) family. Interacts with SELENOF. Not glycosylated. As to expression, predominantly expressed in the epithelial cells of prostate, in both basal and luminal secretory cell populations. Expressed at low levels in spleen, thymus, testis, ovary, small intestine, colon, peripherical blood leukocytes, kidney, adrenal gland and fetal liver. Not detected in prostatic fibromuscular stromal cells, endothelial cells, or infiltrating lymphocytes.

The protein localises to the endoplasmic reticulum membrane. It carries out the reaction all-trans-retinol + NADP(+) = all-trans-retinal + NADPH + H(+). The enzyme catalyses 11-cis-retinol + NADP(+) = 11-cis-retinal + NADPH + H(+). It catalyses the reaction 9-cis-retinol + NADP(+) = 9-cis-retinal + NADPH + H(+). The catalysed reaction is 13-cis-retinol + NADP(+) = 13-cis-retinal + NADPH + H(+). Its pathway is cofactor metabolism; retinol metabolism. SELENOF decreases the retinol dehydrogenase activity. Functionally, retinol dehydrogenase with a clear preference for NADP. Displays high activity towards 9-cis, 11-cis and all-trans-retinol, and to a lesser extent on 13-cis-retinol. Exhibits a low reductive activity towards unsaturated medium-chain aldehydes such as cis -6-nonenal and no activity toward nonanal or 4-hydroxy-nonenal. Has no dehydrogenase activity towards steroid. The polypeptide is Retinol dehydrogenase 11 (RDH11) (Homo sapiens (Human)).